Here is a 512-residue protein sequence, read N- to C-terminus: Tyrosine-protein kinase Lyn (512 aa).

The disordered stretch occupies residues 1–50 (MGCIKSKRKDNLNDDGVDMKTQPVRNTDRTIYVRDPTSNKQQRPVPESQL). The N-myristoyl glycine moiety is linked to residue Gly-2. Cys-3 carries the S-palmitoyl cysteine lipid modification. One can recognise an SH3 domain in the interval 63–123 (EQGDIVVALY…PSNYVAKVNT (61 aa)). Residues 129–226 (WFFKDITRKD…GLCRRLEKAC (98 aa)) form the SH2 domain. A Phosphotyrosine modification is found at Tyr-193. A Phosphoserine modification is found at Ser-228. The region spanning 247 to 501 (IKLVKKLGAG…YLQSVLDDFY (255 aa)) is the Protein kinase domain. ATP contacts are provided by residues 253–261 (LGAGQFGEV) and Lys-275. A phosphotyrosine mark is found at Tyr-306 and Tyr-316. The active-site Proton acceptor is the Asp-367. The residue at position 397 (Tyr-397) is a Phosphotyrosine; by autocatalysis. 2 positions are modified to phosphotyrosine: Tyr-460 and Tyr-473. Tyr-508 carries the phosphotyrosine; by autocatalysis, CSK and MATK modification.

The protein belongs to the protein kinase superfamily. Tyr protein kinase family. SRC subfamily. In terms of assembly, interacts with TEC. Interacts (via SH2 domain) with FLT3 (tyrosine phosphorylated). Interacts with LIME1 and with CD79A upon activation of the B-cell antigen receptor. Interacts with the B-cell receptor complex. Interacts with phosphorylated THEMIS2. Interacts with EPOR. Interacts with MS4A2/FCER1B. Interaction (via the SH2 and SH3 domains) with MUC1 is stimulated by IL7 and the subsequent phosphorylation increases the binding between MUC1 and CTNNB1/beta-catenin. Interacts with ADAM15. Interacts with NDFIP2 and more weakly with NDFIP1. Interacts with FASLG. Interacts with KIT. Interacts with HCLS1. Interacts with FCGR2B. Interacts with FCGR1A; the interaction may be indirect. Interacts with CD19, CD22, CD79A and CD79B. Interacts (via SH3 domain) with CBLC, PPP1R15A and PDE4A. Interacts with TGFB1I1. Interacts (via SH3 domain) with PIK3R1, the regulatory subunit of phosphatidylinositol 3-kinase; this interaction enhances phosphatidylinositol 3-kinase activity. Interacts with CSF2RB, the common subunit of the IL3, IL5 and CSF2 receptors. Interacts with PAG1; identified in a complex with PAG1 and STAT3. Interacts with ABL1. Interacts with PTPN6/SHP-1. Interacts (via SH3 domain) with SCIMP (via proline-rich region). This interaction facilitates the phosphorylation of SCIMP 'Tyr-96', which enhances binding of SCIMP to TLR4, and consequently the phosphorylation of TLR4 in response to stimulation by lipopolysaccharide in macrophages. Interacts with LPXN (via LD motif 3) and the interaction is induced upon B-cell antigen receptor (BCR) activation. Interacts (via SH3-domain) with ANKRD54 (via ankyrin repeat region) in an activation-independent status of LYN. Forms a multiprotein complex with ANKRD54 and HCLS1. Interacts (via SH2 and SH3 domains) with UNC119; leading to LYN activation. Interacts with CD36. Interacts with LYN. Interacts with SKAP1 and FYB1; this interaction promotes the phosphorylation of CLNK. Interacts with BCAR1/CAS and NEDD9/HEF1. Post-translationally, ubiquitinated. Ubiquitination is SH3-dependent. In terms of processing, autophosphorylated. Phosphorylated on tyrosine residues in response to KIT signaling. Phosphorylation at Tyr-397 is required for optimal activity. Phosphorylation at Tyr-508 inhibits kinase activity. Phosphorylated at Tyr-508 by CSK. Dephosphorylated by PTPRC/CD45. Becomes rapidly phosphorylated upon activation of the B-cell receptor and the immunoglobulin receptor FCGR1A. Phosphorylated in response to integrin ITGB1 in B-cells. Detected in spleen (at protein level). Expressed predominantly in B-lymphoid and myeloid cells.

The protein resides in the cell membrane. It localises to the nucleus. The protein localises to the cytoplasm. Its subcellular location is the perinuclear region. It is found in the golgi apparatus. The protein resides in the membrane. It carries out the reaction L-tyrosyl-[protein] + ATP = O-phospho-L-tyrosyl-[protein] + ADP + H(+). Subject to autoinhibition, mediated by intramolecular interactions between the SH2 domain and the C-terminal phosphotyrosine. Phosphorylation at Tyr-397 is required for optimal activity. Phosphorylated by CSK at Tyr-508; phosphorylation at Tyr-508 inhibits kinase activity. Kinase activity is modulated by dephosphorylation by PTPRC/CD45. Functionally, non-receptor tyrosine-protein kinase that transmits signals from cell surface receptors and plays an important role in the regulation of innate and adaptive immune responses, hematopoiesis, responses to growth factors and cytokines, integrin signaling, but also responses to DNA damage and genotoxic agents. Functions primarily as negative regulator, but can also function as activator, depending on the context. Required for the initiation of the B-cell response, but also for its down-regulation and termination. Plays an important role in the regulation of B-cell differentiation, proliferation, survival and apoptosis, and is important for immune self-tolerance. Acts downstream of several immune receptors, including the B-cell receptor, CD79A, CD79B, CD5, CD19, CD22, FCER1, FCGR2, FCGR1A, TLR2 and TLR4. Plays a role in the inflammatory response to bacterial lipopolysaccharide. Mediates the responses to cytokines and growth factors in hematopoietic progenitors, platelets, erythrocytes, and in mature myeloid cells, such as dendritic cells, neutrophils and eosinophils. Acts downstream of EPOR, KIT, MPL, the chemokine receptor CXCR4, as well as the receptors for IL3, IL5 and CSF2. Plays an important role in integrin signaling. Regulates cell proliferation, survival, differentiation, migration, adhesion, degranulation, and cytokine release. Involved in the regulation of endothelial activation, neutrophil adhesion and transendothelial migration. Down-regulates signaling pathways by phosphorylation of immunoreceptor tyrosine-based inhibitory motifs (ITIM), that then serve as binding sites for phosphatases, such as PTPN6/SHP-1, PTPN11/SHP-2 and INPP5D/SHIP-1, that modulate signaling by dephosphorylation of kinases and their substrates. Phosphorylates LIME1 in response to CD22 activation. Phosphorylates BTK, CBL, CD5, CD19, CD72, CD79A, CD79B, CSF2RB, DOK1, HCLS1, LILRB3/PIR-B, MS4A2/FCER1B, SYK and TEC. Promotes phosphorylation of SIRPA, PTPN6/SHP-1, PTPN11/SHP-2 and INPP5D/SHIP-1. Required for rapid phosphorylation of FER in response to FCER1 activation. Mediates KIT phosphorylation. Acts as an effector of EPOR (erythropoietin receptor) in controlling KIT expression and may play a role in erythroid differentiation during the switch between proliferation and maturation. Depending on the context, activates or inhibits several signaling cascades. Regulates phosphatidylinositol 3-kinase activity and AKT1 activation. Regulates activation of the MAP kinase signaling cascade, including activation of MAP2K1/MEK1, MAPK1/ERK2, MAPK3/ERK1, MAPK8/JNK1 and MAPK9/JNK2. Mediates activation of STAT5A and/or STAT5B. Phosphorylates LPXN on 'Tyr-72'. Kinase activity facilitates TLR4-TLR6 heterodimerization and signal initiation. Phosphorylates SCIMP on 'Tyr-96'; this enhances binding of SCIMP to TLR4, promoting the phosphorylation of TLR4, and a selective cytokine response to lipopolysaccharide in macrophages. Phosphorylates CLNK. Phosphorylates BCAR1/CAS and NEDD9/HEF1. This Rattus norvegicus (Rat) protein is Tyrosine-protein kinase Lyn (Lyn).